The following is a 379-amino-acid chain: MSGNTTLLLSNPTNVLDNSSVLNVSVSPPVLKWETPTFTTAARFRVAATLVLFVFAAASNLSVLLSVTRGRGRRLASHLRPLIASLASADLVMTFVVMPLDAVWNVTVQWYAGDAMCKLMCFLKLFAMHSAAFILVVVSLDRHHAILHPLDTLDAGRRNRRMLLTAWILSLLLASPQLFIFRAIKAKGVDFVQCATHGSFQQHWQETAYNMFHFVTLYVFPLLVMSLCYTRILVEINRQMHRSKDKAGEPCLRRSGTDMIPKARMKTLKMTIIIVASFVICWTPYYLLGIWYWFQPQMLHVIPDYVHHVFFVFGNLNTCCDPVIYGFFTPSFRADLSRCFCWRNQNASAKSLPHFSGHRREVSGEAESDLGSGDQPSGQ.

Residues Met1–Arg45 lie on the Extracellular side of the membrane. Asn4, Asn18, and Asn23 each carry an N-linked (GlcNAc...) asparagine glycan. The chain crosses the membrane as a helical span at residues Val46 to Leu65. The Cytoplasmic portion of the chain corresponds to Ser66–Arg80. Residues Pro81–Leu100 form a helical membrane-spanning segment. The Extracellular segment spans residues Asp101 to Lys118. An N-linked (GlcNAc...) asparagine glycan is attached at Asn105. A disulfide bond links Cys117 and Cys194. Residues Leu119–Leu140 traverse the membrane as a helical segment. At Asp141–Trp167 the chain is on the cytoplasmic side. A helical transmembrane segment spans residues Ile168 to Ile184. Residues Lys185 to Asn210 are Extracellular-facing. A helical transmembrane segment spans residues Met211–Thr230. Residues Arg231–Thr283 lie on the Cytoplasmic side of the membrane. Residues Pro284–Ile302 form a helical membrane-spanning segment. The Extracellular portion of the chain corresponds to Pro303–His308. Residues Val309 to Phe328 traverse the membrane as a helical segment. Residues Thr329–Gln379 are Cytoplasmic-facing. Residues Phe355 to Gln379 form a disordered region.

The protein belongs to the G-protein coupled receptor 1 family. Phosphorylated on the C-terminal cytoplasmic tail.

Its subcellular location is the cell membrane. Its function is as follows. Receptor for gonadotropin releasing hormone II (GnRH II). This receptor mediates its action by association with G proteins that activate a phosphatidylinositol-calcium second messenger system. This Clarias gariepinus (North African catfish) protein is Gonadotropin-releasing hormone II receptor.